Here is a 138-residue protein sequence, read N- to C-terminus: Integration host factor subunit beta (138 aa).

Residues 81 to 98 (KAGKELRERVDRSLERQG) show a composition bias toward basic and acidic residues. The tract at residues 81–138 (KAGKELRERVDRSLERQGDSSSEGEPVSLTAVKAARQAGGHHAAGFPAEATPTLVMSR) is disordered.

This sequence belongs to the bacterial histone-like protein family. Heterodimer of an alpha and a beta chain.

In terms of biological role, this protein is one of the two subunits of integration host factor, a specific DNA-binding protein that functions in genetic recombination as well as in transcriptional and translational control. This is Integration host factor subunit beta from Ralstonia nicotianae (strain ATCC BAA-1114 / GMI1000) (Ralstonia solanacearum).